Consider the following 428-residue polypeptide: Serine--tRNA ligase (428 aa).

231-233 contacts L-serine; that stretch reads TAE. Residues 262-264 and Val278 each bind ATP; that span reads RRE. An L-serine-binding site is contributed by Glu285. 349–352 provides a ligand contact to ATP; sequence EVSS. Ser384 is an L-serine binding site.

Belongs to the class-II aminoacyl-tRNA synthetase family. Type-1 seryl-tRNA synthetase subfamily. As to quaternary structure, homodimer. The tRNA molecule binds across the dimer.

It is found in the cytoplasm. The catalysed reaction is tRNA(Ser) + L-serine + ATP = L-seryl-tRNA(Ser) + AMP + diphosphate + H(+). It catalyses the reaction tRNA(Sec) + L-serine + ATP = L-seryl-tRNA(Sec) + AMP + diphosphate + H(+). It participates in aminoacyl-tRNA biosynthesis; selenocysteinyl-tRNA(Sec) biosynthesis; L-seryl-tRNA(Sec) from L-serine and tRNA(Sec): step 1/1. Functionally, catalyzes the attachment of serine to tRNA(Ser). Is also able to aminoacylate tRNA(Sec) with serine, to form the misacylated tRNA L-seryl-tRNA(Sec), which will be further converted into selenocysteinyl-tRNA(Sec). In Chlamydia trachomatis serovar A (strain ATCC VR-571B / DSM 19440 / HAR-13), this protein is Serine--tRNA ligase.